Consider the following 428-residue polypeptide: Histidine--tRNA ligase (428 aa).

It belongs to the class-II aminoacyl-tRNA synthetase family. As to quaternary structure, homodimer.

The protein localises to the cytoplasm. It catalyses the reaction tRNA(His) + L-histidine + ATP = L-histidyl-tRNA(His) + AMP + diphosphate + H(+). This chain is Histidine--tRNA ligase, found in Lactobacillus helveticus (strain DPC 4571).